The sequence spans 585 residues: Proline--tRNA ligase (585 aa).

Belongs to the class-II aminoacyl-tRNA synthetase family. ProS type 1 subfamily. In terms of assembly, homodimer.

The protein localises to the cytoplasm. The enzyme catalyses tRNA(Pro) + L-proline + ATP = L-prolyl-tRNA(Pro) + AMP + diphosphate. Functionally, catalyzes the attachment of proline to tRNA(Pro) in a two-step reaction: proline is first activated by ATP to form Pro-AMP and then transferred to the acceptor end of tRNA(Pro). As ProRS can inadvertently accommodate and process non-cognate amino acids such as alanine and cysteine, to avoid such errors it has two additional distinct editing activities against alanine. One activity is designated as 'pretransfer' editing and involves the tRNA(Pro)-independent hydrolysis of activated Ala-AMP. The other activity is designated 'posttransfer' editing and involves deacylation of mischarged Ala-tRNA(Pro). The misacylated Cys-tRNA(Pro) is not edited by ProRS. This chain is Proline--tRNA ligase, found in Nocardia farcinica (strain IFM 10152).